Here is a 465-residue protein sequence, read N- to C-terminus: Asparagine--tRNA ligase (465 aa).

It belongs to the class-II aminoacyl-tRNA synthetase family. As to quaternary structure, homodimer.

The protein localises to the cytoplasm. It carries out the reaction tRNA(Asn) + L-asparagine + ATP = L-asparaginyl-tRNA(Asn) + AMP + diphosphate + H(+). The protein is Asparagine--tRNA ligase of Clostridium perfringens (strain SM101 / Type A).